We begin with the raw amino-acid sequence, 224 residues long: Propanediol dehydratase medium subunit (224 aa).

The segment at 1–18 is targets protein to the BMC; that stretch reads MEINEKLLRQIIEDVLRD.

It belongs to the diol/glycerol dehydratase medium subunit family. In terms of assembly, the propanediol dehydratase enzyme is a heterotrimeric complex composed of a large (PduC), a medium (PduD) and a small (PduE) subunit. The cofactor is adenosylcob(III)alamin.

It localises to the bacterial microcompartment. It catalyses the reaction propane-1,2-diol = propanal + H2O. It participates in polyol metabolism; 1,2-propanediol degradation. With respect to regulation, inhibited by glycerol. Functionally, part of the PduCDE complex that catalyzes the dehydration of 1,2-propanediol (1,2-PD) to propionaldehyde. Required for S.typhimurium growth on 1,2-PD as the sole carbon and energy source. This subunit is directly targeted to the bacterial microcompartment (BMC) dedicated to 1,2-PD degradation, and is also responsible for targeting the other 2 subunits (pduC and pduE). The 1,2-PD-specific bacterial microcompartment (BMC) concentrates low levels of 1,2-PD catabolic enzymes, concentrates volatile reaction intermediates thus enhancing pathway flux and keeps the level of toxic, mutagenic propionaldehyde low. The protein is Propanediol dehydratase medium subunit of Salmonella typhimurium (strain LT2 / SGSC1412 / ATCC 700720).